The sequence spans 886 residues: Probable mixed-linked glucan synthase 8 (886 aa).

2 consecutive transmembrane segments (helical) span residues 87–107 (ILLH…VLFF) and 118–138 (GMFF…SWLL). The active site involves aspartate 213. Substrate contacts are provided by aspartate 413 and aspartate 415. The active site involves aspartate 577. Transmembrane regions (helical) follow at residues 659–679 (VFLL…IFYI), 683–703 (FPTY…IGMV), 723–743 (IIGA…KCFG), 775–795 (LLFP…AAIG), 812–832 (LGLV…LGIM), and 840–860 (YILF…DIAI).

This sequence belongs to the glycosyltransferase 2 family. Plant cellulose synthase-like F subfamily.

The protein localises to the golgi apparatus membrane. Its function is as follows. May catalyze both beta-1,3 and beta-1,4 glycosidic linkage on beta-D-glucan. Essential for (1,3;1,4)-beta-D-glucans synthesis in grasses and cereals (Poaceae). The mixed-linked glucans (which are not present in walls of dicotyledons or most other monocotyledonous plants) are particularly important constituents of the walls of the starchy endosperm and aleurone cells of cereal grains such as oats, wheat, rice and barley. They can account for up to 70% by weight of the wall. This Oryza sativa subsp. japonica (Rice) protein is Probable mixed-linked glucan synthase 8 (CSFL8).